A 304-amino-acid polypeptide reads, in one-letter code: MLGKARELANYQDEPEQLPTGSFGKNAFLRLGFERRPERTVLATLHRRAPLIVQQALYWDEGMPTLPCVSIISNAGGILQGDRYAIEIDLEPDTQAHVTTQSATRIQEMDANFATQTQTQTITLGANSYLEYIPHPIIPHKHSRFVQQTEVTIHPTATLIYSEVLMAGRKYYGTGELFHYDLFSSKFHAAHTDGTSLFTEKFIVEPARGNVSRLGAMGSFHVFGNLILLTPKTHADRLFETIDPVFDMDEGIAWGASRLPNDAGLLFKVLGMESAPVRAAIRKIWEAARQEVTGASLPENFLWA.

Belongs to the UreD family. In terms of assembly, ureD, UreF and UreG form a complex that acts as a GTP-hydrolysis-dependent molecular chaperone, activating the urease apoprotein by helping to assemble the nickel containing metallocenter of UreC. The UreE protein probably delivers the nickel.

It is found in the cytoplasm. Functionally, required for maturation of urease via the functional incorporation of the urease nickel metallocenter. Disrupting the ure2 operon has no effect on urease activity or pathogen survival in BALB/c mice when administered orally. The polypeptide is Urease accessory protein UreD 2 (Brucella abortus (strain 2308)).